Consider the following 576-residue polypeptide: Non-neuronal cytoplasmic intermediate filament protein (576 aa).

Residues 1-51 (MTSKISTTYEEEGRQSKIQPRAFVITRSGPSSKSSSFSARQSYASSRQSIT) form a disordered region. A head region spans residues 2–75 (TSKISTTYEE…FRGTREKEKR (74 aa)). Low complexity predominate over residues 28-49 (SGPSSKSSSFSARQSYASSRQS). The region spanning 73–425 (EKREMQNLNE…KLLEGEESRV (353 aa)) is the IF rod domain. The coil 1A stretch occupies residues 76 to 108 (EMQNLNERLASYIEKVHFLDAQVKKLEAENEAL). The linker 1 stretch occupies residues 109-122 (RNRKSESLQPIRDA). Positions 123–260 (YENELAQARK…DLLDQLELLK (138 aa)) are coil 1B. The segment at 261 to 278 (PEPIQIKGMDYAEFWKSE) is linker 2. Positions 279-425 (LSKCVREIQS…KLLEGEESRV (147 aa)) are coil 2. Residues 426–576 (GLRSLVEQAI…KATLIAKFSG (151 aa)) form a tail region. Residues 456 to 574 (GSMTIQRSSK…NEKATLIAKF (119 aa)) enclose the LTD domain.

The protein belongs to the intermediate filament family. As to quaternary structure, can form homopolymers.

The protein resides in the cytoplasm. The protein is Non-neuronal cytoplasmic intermediate filament protein of Cornu aspersum (Brown garden snail).